A 33-amino-acid chain; its full sequence is uncharacterized protein (33 aa).

This is an uncharacterized protein from Staphylococcus aureus (strain N315).